The following is a 527-amino-acid chain: Bromodomain-containing protein 9 (527 aa).

Over residues 1–16 the composition is skewed to basic residues; it reads MNVSVTKRRKKKKKKK. Residues 1 to 54 are disordered; sequence MNVSVTKRRKKKKKKKSEKEKDKYLDEDERRRRKEEKKRKREKEQCDSEGETEV. Positions 17–30 are enriched in basic and acidic residues; the sequence is SEKEKDKYLDEDER. Residues 31 to 41 are compositionally biased toward basic residues; the sequence is RRRKEEKKRKR. Positions 78–182 constitute a Bromo domain; it reads NESTPLQQLL…HTGFKMMSKA (105 aa). The segment at 156-158 is histone H4K5ac H4K8ac and histone H4K5bu H4K8bu binding; the sequence is TYN. Residues 468 to 478 show a composition bias toward basic and acidic residues; that stretch reads DFHDVHNDRGG. The segment at 468-527 is disordered; it reads DFHDVHNDRGGSRPSSSSSMSNNSERDHHLGSPSRISVGEQQDIHDPYEFLQSPETDNQN. Residues 479 to 490 are compositionally biased toward low complexity; sequence SRPSSSSSMSNN.

Binds acetylated histones H3 and H4. Binds butyrylated histone H4.

Its subcellular location is the nucleus. Its function is as follows. Plays a role in chromatin remodeling and regulation of transcription. Acts as a chromatin reader that recognizes and binds acylated histones: binds histones that are acetylated and/or butyrylated. This chain is Bromodomain-containing protein 9 (brd9), found in Xenopus laevis (African clawed frog).